The primary structure comprises 112 residues: Protein AV2 (112 aa).

The protein belongs to the geminiviridae protein AV2/V2 family. As to quaternary structure, interacts with host SGS3.

It is found in the host cytoplasm. The protein localises to the host perinuclear region. Its function is as follows. Through its interaction with host SGS3, acts as a suppressor of RNA-mediated gene silencing, also known as post-transcriptional gene silencing (PTGS), a mechanism of plant viral defense that limits the accumulation of viral RNAs. The chain is Protein AV2 from Indian cassava mosaic virus (ICMV).